A 379-amino-acid chain; its full sequence is Cytochrome b (379 aa).

Transmembrane regions (helical) follow at residues 34–54, 78–99, 114–134, and 179–199; these read FGSLLGACLILQTITGIFLAM, WLIRNMHANGASLFFMCIYLHI, WNTGITLLLLTMATAFVGYVL, and FFTFHFLLPFTIMGMTMVHLL. Histidine 84 and histidine 98 together coordinate heme b. Heme b contacts are provided by histidine 183 and histidine 197. An a ubiquinone-binding site is contributed by histidine 202. The next 4 membrane-spanning stretches (helical) occupy residues 227–247, 289–309, 321–341, and 348–368; these read YKDLLGLILMLAFLLTLTLFY, LGGVLALLLSILVLFLMPTLH, LTQTLFWSFIANLMVLTWIGG, and FITIGQVASILHFLILLILMP.

It belongs to the cytochrome b family. As to quaternary structure, the cytochrome bc1 complex contains 3 respiratory subunits (MT-CYB, CYC1 and UQCRFS1), 2 core proteins (UQCRC1 and UQCRC2) and probably 6 low-molecular weight proteins. Heme b is required as a cofactor.

It is found in the mitochondrion inner membrane. In terms of biological role, component of the ubiquinol-cytochrome c reductase complex (complex III or cytochrome b-c1 complex) that is part of the mitochondrial respiratory chain. The b-c1 complex mediates electron transfer from ubiquinol to cytochrome c. Contributes to the generation of a proton gradient across the mitochondrial membrane that is then used for ATP synthesis. The protein is Cytochrome b (MT-CYB) of Glyptemys muhlenbergii (Bog turtle).